The following is a 531-amino-acid chain: DNA damage-binding protein cmr1 (531 aa).

2 disordered regions span residues 37 to 83 and 218 to 264; these read GIFP…RGIA and DASQ…MHIH. The segment covering 53 to 64 has biased composition (basic residues); it reads KPKKKPAPKKIK. The WD 1 repeat unit spans residues 186-227; it reads VTPERIYTMTFHPSEAKPLIFAGDKMGNLGVLDASQERPVSS. Over residues 233–245 the composition is skewed to acidic residues; the sequence is GDEEEQEDDDDPD. WD repeat units follow at residues 253–293, 300–340, 345–385, 392–431, 454–497, and 500–531; these read PHTR…SVET, SDDV…RTAV, LSEK…HDDP, LSRLSVSHAAFNSAGQVATSSYDDSLKIYDFGAKGIASWE, GRWV…LAQL, and DGITAVPAVAVFHRSKNWIAGGTASGKICLWM.

This sequence belongs to the WD repeat DDB2/WDR76 family.

Its function is as follows. DNA-binding protein that binds to both single- and double-stranded DNA. Binds preferentially to UV-damaged DNA. May be involved in DNA-metabolic processes. This Aspergillus clavatus (strain ATCC 1007 / CBS 513.65 / DSM 816 / NCTC 3887 / NRRL 1 / QM 1276 / 107) protein is DNA damage-binding protein cmr1.